A 125-amino-acid chain; its full sequence is Holo-[acyl-carrier-protein] synthase (125 aa).

Positions 8 and 57 each coordinate Mg(2+).

Belongs to the P-Pant transferase superfamily. AcpS family. The cofactor is Mg(2+).

The protein resides in the cytoplasm. The catalysed reaction is apo-[ACP] + CoA = holo-[ACP] + adenosine 3',5'-bisphosphate + H(+). Functionally, transfers the 4'-phosphopantetheine moiety from coenzyme A to a Ser of acyl-carrier-protein. This Koribacter versatilis (strain Ellin345) protein is Holo-[acyl-carrier-protein] synthase.